The chain runs to 128 residues: Sulfurtransferase TusD (128 aa).

Catalysis depends on Cys78, which acts as the Cysteine persulfide intermediate.

Belongs to the DsrE/TusD family. Heterohexamer, formed by a dimer of trimers. The hexameric TusBCD complex contains 2 copies each of TusB, TusC and TusD. The TusBCD complex interacts with TusE.

Its subcellular location is the cytoplasm. Its function is as follows. Part of a sulfur-relay system required for 2-thiolation of 5-methylaminomethyl-2-thiouridine (mnm(5)s(2)U) at tRNA wobble positions. Accepts sulfur from TusA and transfers it in turn to TusE. This Escherichia coli O7:K1 (strain IAI39 / ExPEC) protein is Sulfurtransferase TusD.